A 410-amino-acid chain; its full sequence is Squalene synthase 1 (410 aa).

At Gly2 the chain carries N-acetylglycine. The next 2 helical transmembrane spans lie at 283–303 and 387–407; these read SIFR…ALCY and QPNS…FAYL.

Belongs to the phytoene/squalene synthase family. Requires Mg(2+) as cofactor. Mn(2+) is required as a cofactor. In terms of tissue distribution, expressed in all tissues analyzed (seedlings, cotyledons, inflorescences, siliques, leaves, stems and roots). Highly expressed in roots and pollen.

It is found in the endoplasmic reticulum membrane. It catalyses the reaction 2 (2E,6E)-farnesyl diphosphate + NADPH + H(+) = squalene + 2 diphosphate + NADP(+). The enzyme catalyses 2 (2E,6E)-farnesyl diphosphate + NADH + H(+) = squalene + 2 diphosphate + NAD(+). Its pathway is terpene metabolism; lanosterol biosynthesis; lanosterol from farnesyl diphosphate: step 1/3. This chain is Squalene synthase 1, found in Arabidopsis thaliana (Mouse-ear cress).